The primary structure comprises 377 residues: Alanine racemase (377 aa).

Catalysis depends on K37, which acts as the Proton acceptor; specific for D-alanine. The residue at position 37 (K37) is an N6-(pyridoxal phosphate)lysine. A substrate-binding site is contributed by R135. The active-site Proton acceptor; specific for L-alanine is the Y271. Substrate is bound at residue M319.

This sequence belongs to the alanine racemase family. Pyridoxal 5'-phosphate serves as cofactor.

It carries out the reaction L-alanine = D-alanine. Its pathway is amino-acid biosynthesis; D-alanine biosynthesis; D-alanine from L-alanine: step 1/1. Catalyzes the interconversion of L-alanine and D-alanine. May also act on other amino acids. The sequence is that of Alanine racemase (alr) from Helicobacter pylori (strain J99 / ATCC 700824) (Campylobacter pylori J99).